The chain runs to 253 residues: Ubiquinone/menaquinone biosynthesis C-methyltransferase UbiE (253 aa).

S-adenosyl-L-methionine is bound by residues Thr76, Asp97, 125 to 126, and Ser142; that span reads NA.

It belongs to the class I-like SAM-binding methyltransferase superfamily. MenG/UbiE family.

The catalysed reaction is a 2-demethylmenaquinol + S-adenosyl-L-methionine = a menaquinol + S-adenosyl-L-homocysteine + H(+). It carries out the reaction a 2-methoxy-6-(all-trans-polyprenyl)benzene-1,4-diol + S-adenosyl-L-methionine = a 5-methoxy-2-methyl-3-(all-trans-polyprenyl)benzene-1,4-diol + S-adenosyl-L-homocysteine + H(+). It participates in quinol/quinone metabolism; menaquinone biosynthesis; menaquinol from 1,4-dihydroxy-2-naphthoate: step 2/2. The protein operates within cofactor biosynthesis; ubiquinone biosynthesis. Functionally, methyltransferase required for the conversion of demethylmenaquinol (DMKH2) to menaquinol (MKH2) and the conversion of 2-polyprenyl-6-methoxy-1,4-benzoquinol (DDMQH2) to 2-polyprenyl-3-methyl-6-methoxy-1,4-benzoquinol (DMQH2). The polypeptide is Ubiquinone/menaquinone biosynthesis C-methyltransferase UbiE (Xanthomonas axonopodis pv. citri (strain 306)).